The following is a 372-amino-acid chain: Queuine tRNA-ribosyltransferase (372 aa).

The active-site Proton acceptor is Asp89. Substrate contacts are provided by residues 89 to 93 (DSGGF), Asp161, and Gly232. An RNA binding region spans residues 262–268 (GIGDLPS). Asp281 serves as the catalytic Nucleophile. The interval 286 to 290 (TKAAR) is RNA binding; important for wobble base 34 recognition. Residues Cys319, Cys321, Cys324, and His351 each contribute to the Zn(2+) site.

The protein belongs to the queuine tRNA-ribosyltransferase family. As to quaternary structure, homodimer. Within each dimer, one monomer is responsible for RNA recognition and catalysis, while the other monomer binds to the replacement base PreQ1. Zn(2+) serves as cofactor.

It carries out the reaction 7-aminomethyl-7-carbaguanine + guanosine(34) in tRNA = 7-aminomethyl-7-carbaguanosine(34) in tRNA + guanine. The protein operates within tRNA modification; tRNA-queuosine biosynthesis. In terms of biological role, catalyzes the base-exchange of a guanine (G) residue with the queuine precursor 7-aminomethyl-7-deazaguanine (PreQ1) at position 34 (anticodon wobble position) in tRNAs with GU(N) anticodons (tRNA-Asp, -Asn, -His and -Tyr). Catalysis occurs through a double-displacement mechanism. The nucleophile active site attacks the C1' of nucleotide 34 to detach the guanine base from the RNA, forming a covalent enzyme-RNA intermediate. The proton acceptor active site deprotonates the incoming PreQ1, allowing a nucleophilic attack on the C1' of the ribose to form the product. After dissociation, two additional enzymatic reactions on the tRNA convert PreQ1 to queuine (Q), resulting in the hypermodified nucleoside queuosine (7-(((4,5-cis-dihydroxy-2-cyclopenten-1-yl)amino)methyl)-7-deazaguanosine). This Chlamydia pneumoniae (Chlamydophila pneumoniae) protein is Queuine tRNA-ribosyltransferase.